A 116-amino-acid chain; its full sequence is Large ribosomal subunit protein eL31 (116 aa).

This sequence belongs to the eukaryotic ribosomal protein eL31 family.

The sequence is that of Large ribosomal subunit protein eL31 (RPL31) from Chlamydomonas reinhardtii (Chlamydomonas smithii).